A 380-amino-acid polypeptide reads, in one-letter code: Glucose-1-phosphate adenylyltransferase (380 aa).

Residues Gly164, 179 to 180 (EK), and Ser190 contribute to the alpha-D-glucose 1-phosphate site.

It belongs to the bacterial/plant glucose-1-phosphate adenylyltransferase family. In terms of assembly, homotetramer.

The catalysed reaction is alpha-D-glucose 1-phosphate + ATP + H(+) = ADP-alpha-D-glucose + diphosphate. Its pathway is glycan biosynthesis; glycogen biosynthesis. Functionally, involved in the biosynthesis of ADP-glucose, a building block required for the elongation reactions to produce glycogen. Catalyzes the reaction between ATP and alpha-D-glucose 1-phosphate (G1P) to produce pyrophosphate and ADP-Glc. This is Glucose-1-phosphate adenylyltransferase from Streptococcus pneumoniae (strain 70585).